Here is a 50-residue protein sequence, read N- to C-terminus: DPVHCKEKKCIFYRSEIAKKMRFFVVKTLKKRKKKCGKNVIDNGIKLNFM.

This is an uncharacterized protein from Dichelobacter nodosus (Bacteroides nodosus).